Reading from the N-terminus, the 265-residue chain is Glutamate racemase (265 aa).

Residues 12 to 13 and 44 to 45 contribute to the substrate site; these read DS and YG. C75 acts as the Proton donor/acceptor in catalysis. 76–77 lines the substrate pocket; that stretch reads NT. C186 functions as the Proton donor/acceptor in the catalytic mechanism. Residue 187-188 coordinates substrate; the sequence is TH.

Belongs to the aspartate/glutamate racemases family.

The catalysed reaction is L-glutamate = D-glutamate. The protein operates within cell wall biogenesis; peptidoglycan biosynthesis. Provides the (R)-glutamate required for cell wall biosynthesis. The protein is Glutamate racemase of Pseudomonas putida (strain W619).